The sequence spans 93 residues: Small ribosomal subunit protein uS19 (93 aa).

The protein belongs to the universal ribosomal protein uS19 family.

In terms of biological role, protein S19 forms a complex with S13 that binds strongly to the 16S ribosomal RNA. The chain is Small ribosomal subunit protein uS19 from Campylobacter hominis (strain ATCC BAA-381 / DSM 21671 / CCUG 45161 / LMG 19568 / NCTC 13146 / CH001A).